Consider the following 407-residue polypeptide: Imidazolonepropionase (407 aa).

Fe(3+)-binding residues include His68 and His70. Zn(2+)-binding residues include His68 and His70. The 4-imidazolone-5-propanoate site is built by Arg77, Tyr140, and His173. Residue Tyr140 coordinates N-formimidoyl-L-glutamate. His238 provides a ligand contact to Fe(3+). A Zn(2+)-binding site is contributed by His238. Residue Gln241 coordinates 4-imidazolone-5-propanoate. A Fe(3+)-binding site is contributed by Asp313. Asp313 is a binding site for Zn(2+). N-formimidoyl-L-glutamate is bound by residues Asn315 and Gly317. Thr318 contacts 4-imidazolone-5-propanoate.

This sequence belongs to the metallo-dependent hydrolases superfamily. HutI family. Requires Zn(2+) as cofactor. It depends on Fe(3+) as a cofactor.

It localises to the cytoplasm. It carries out the reaction 4-imidazolone-5-propanoate + H2O = N-formimidoyl-L-glutamate. It participates in amino-acid degradation; L-histidine degradation into L-glutamate; N-formimidoyl-L-glutamate from L-histidine: step 3/3. In terms of biological role, catalyzes the hydrolytic cleavage of the carbon-nitrogen bond in imidazolone-5-propanoate to yield N-formimidoyl-L-glutamate. It is the third step in the universal histidine degradation pathway. The sequence is that of Imidazolonepropionase from Burkholderia ambifaria (strain MC40-6).